The chain runs to 536 residues: Probable protein S-acyltransferase 23 (536 aa).

Positions 1 to 23 (MDSSEIEVVPLDSNSHQSPTESP) are disordered. Residues 12-23 (DSNSHQSPTESP) are compositionally biased toward polar residues. 6 ANK repeats span residues 57 to 86 (NGFYALQWAALNNSLHVAQYIIQHGGDVNS), 90 to 119 (IQQTPLHWAAVKGSIDVADLLLQHGARIEA), 123 to 153 (NGFRAVHVASQYGQTAFVNHIIVDYAADYNA), 157 to 186 (EGRSPLHWAAYNGFTETVRLLLFRDACQNR), 190 to 219 (TGCTPLHWAVIKENVEACTLLVHAGTKEEL), and 225 to 254 (TGSTPLKLASDKGHRQLALFLSKAMRTRKN). 2 consecutive transmembrane segments (helical) span residues 270–290 (YAPMLFSLIVILMVLFITSIV) and 298–318 (ITAMVGLWACFGLSCGVYALI). The region spanning 363–413 (QLCPTCKIIRPVRSKHCPTCKRCVEQFDHHCPWISNCVGKKNKRYFLVFVI) is the DHHC domain. C393 functions as the S-palmitoyl cysteine intermediate in the catalytic mechanism. 2 consecutive transmembrane segments (helical) span residues 407 to 427 (YFLVFVIMGALTSFVGGTTAV) and 454 to 474 (AAVFLFFDLLIFIATMTLTIS).

Belongs to the DHHC palmitoyltransferase family. Expressed in roots, shoots, flowers and pollen.

The protein resides in the golgi apparatus membrane. It catalyses the reaction L-cysteinyl-[protein] + hexadecanoyl-CoA = S-hexadecanoyl-L-cysteinyl-[protein] + CoA. In terms of biological role, palmitoyl acyltransferase. This chain is Probable protein S-acyltransferase 23 (PAT23), found in Arabidopsis thaliana (Mouse-ear cress).